A 351-amino-acid chain; its full sequence is Outer membrane porin PhoE (351 aa).

The first 21 residues, 1–21, serve as a signal peptide directing secretion; the sequence is MKKSTLALVVMGIVASASVQA.

Belongs to the Gram-negative porin family. As to quaternary structure, homotrimer. Forms mixed heterotrimers with OmpC and with OmpF; other mixed heterotrimers are also probable.

It localises to the cell outer membrane. Its function is as follows. Uptake of inorganic phosphate, phosphorylated compounds, and some other negatively charged solutes. In Escherichia coli (strain K12), this protein is Outer membrane porin PhoE (phoE).